The following is a 666-amino-acid chain: MKAFRKLLLGLALPTTIGPLLGLLLTNTDTVKNESLTTVRHRSSINQDFDGIFHTVKLLEPIQQSNADPAASFALFQQKFPNLKRVANSTLNTFDVYNLLSGWKSSLTAYLNQVLALQQRIKAADQIFPNQKETLPKDENPNIFEVLGAYGGKGFFPTLGSNGLHLPPQLFQFFRDFQLSSFTIKDFEVALVSEPDIVQHDKVRYAFQVQFNLVLQLQINRNPVLFDFNLQLKTNNFANQTSFDELFNEKTNPLNWQFFSKLKVNHLVYEGNDITQLANTLLQSQFNVLQLDLNKSIYRLNLNAMAQRFEHDWVQPLYAKRTQAKIAYEAEQARIAAENKRKELERQKLLAELKAKAEHYQKIKQARENMLKGLKSITDFVKFWKSPDRLLVGFNKQDDITTRAGVYKALQIAYANYPQWTFYLTLQGWKNGSELLLKRPSWTNLLSDIHFQKAFNLKNTVSEQTLGAATLPGYGYYGLRMSDWLRWALGYYSYIHMGVPQNVQTKFTGTPDNEQQVWIANEPFEWNKHYGVGPKYKDKAYRFNMEISFELEGWIAVKWWAWAFKGSIPGNWKGKLKVTHLFDGMVPVWELGPVNTHLPQYSFTDQQQLLFVPHSIQKIEAIGADKGINDLLKTQNLHNLERLSYESTNPIDLISYLLYAIQYIKV.

Belongs to the MG032/MG096/MG288 family.

This is an uncharacterized protein from Mycoplasma pneumoniae (strain ATCC 29342 / M129 / Subtype 1) (Mycoplasmoides pneumoniae).